Here is a 123-residue protein sequence, read N- to C-terminus: Large ribosomal subunit protein bL12 (123 aa).

This sequence belongs to the bacterial ribosomal protein bL12 family. As to quaternary structure, homodimer. Part of the ribosomal stalk of the 50S ribosomal subunit. Forms a multimeric L10(L12)X complex, where L10 forms an elongated spine to which 2 to 4 L12 dimers bind in a sequential fashion. Binds GTP-bound translation factors.

Forms part of the ribosomal stalk which helps the ribosome interact with GTP-bound translation factors. Is thus essential for accurate translation. The protein is Large ribosomal subunit protein bL12 of Mycoplasmopsis agalactiae (strain NCTC 10123 / CIP 59.7 / PG2) (Mycoplasma agalactiae).